The chain runs to 1621 residues: MGEFKSQLRTLLKKNLLLKGKSKCAICCEILFPIIVILVIFAILVLVMAFKANYDPYNASNFVNRFENTVLLYGNADGALNVEQLGVMNILKNEVATAKNLNSTQIDQLFIEINDQTAMEAFFQNKSDFVFSAVWFNNSALSSGTNPFQYNIRVDSDDVMDTEELIKEDDTSDSEVYVKKRFVATQVAMDQAIFSYFGLNKTLNVKGQRYPDPWTELWQKWIQGRDGIFKDAGSVFITAALMIFGFRLITDLVIEKETKIRESMKMMGLNDLAYFISWMITSLVTALPVNLIISIILKGSSVIHHTNWGVVIFTLILYLLTLLLLAFILSMFFDKSKFCGLLSFVIIIAINIGGIFVAKYDFAPGAKLFLCLISPIAIACSIFAMSARDLEEINTYNWDMMVTENQVIGMLVLDIFFYIFLVWYLDNVVTTEFGTKQKWYFLFTKKYWFPKKCNENGDEQDIESTYQNEDVEMTPVGVGQKVTISIRNLRKEYNTGDGLRVAVNDLYLDMYENQIHALLGPNGSGKSTTIGMMTGLTPPTNGNAFVHGYGILNQMSSVRKHLGVCPQTDIIWQQLTVLDHLKIYASLKGVSPSEIQREAEKMAVEVDLGEKIHSQAGSLSGGQKRKLCLGIAFIGRSDVIFLDEVSSGMDPLSRRVVWDFLLKYKKGRTIILTTHYLEEADYLGDRIAIISHGKLRCDGSSLYLKNKFGCGYLLTCSKILSSMNNFNAQQVTEFIHNYIPEATILSNAGTELSYRLPTASLPHFAQFFREFDDRLQSFGLLTYGISVTTLEEVFLSLGREAALEKGGFNIDQNENQDLEQLRKSIAISSTGVKAGQQFKGLLIKRIKTSIKDAKSFFLTLVIPLVFIIGSIIMYKAMDKPQIFYNNATVPLTMNLGIYSGLENNFVPMQSSNELNWENSLNSSPYFNKFRFIPQTENFEDYLIEGKTNGSFAYKSSAGAINFTLPIDVSSTTIDYTAFYNKDYIHSLPVHINLVNDAVLRKHNNIGIQVTNMPFKHVLSNFDLASEGMNISSIVYFIIIMMAGYALMAGSFAGNVAQERTNRVKRLLYISGCKKYVYWLSNLVWDYFFSFILILLTTCILAGIRENYKSQFGLMFLCLILFCVSVVPLSYLLSYRFASFGKATGAITAIHFAIGIIFVIISLNLRIQVLIDQDVDFQKAADAVDIVFCILSPLFAYSRILFLVSEFPGSVRVGTLKVDNYWSMDYGGSPMIILAAHCIVWVSWIMILDYTPELIGKIRNPKNIEAPPPPDDEDSDVTAERTRLLSVGPNDEPLQFRNLHKLFPAVGKAAPKAAVYNSTLSIPKGQTFGLLGLNGAGKTTTIAMLCGDIVPSSGEVTINGHDLITDRGQALRSNGLCPQFDALITLLSAREQLTLYCAIKGVPEDKVKEVVEAFIKMMDLGAIANSNTGGYSGGNKRKTSLSIAMLGNPSIVSLDEPSTGCDAVVRKYIWNVVSELAKDKVIILTSHSMAEVEALCYRMTIMRDGKMKCLGSIQHIKSKFGAGYTFDVKFKKEYLDSGIQTVLKAIPNSIVLDEHDVMASFEIPNPPDNPVKISTLFESLSHLTILDDYNVSQTSLESVFLKLTGASYEDRLNLNNQKHTSD.

Helical transmembrane passes span 30 to 50 (ILFPIIVILVIFAILVLVMAF), 234 to 254 (SVFITAALMIFGFRLITDLVI), 276 to 296 (ISWMITSLVTALPVNLIISII), 309 to 329 (GVVIFTLILYLLTLLLLAFIL), 338 to 358 (FCGLLSFVIIIAINIGGIFVA), 365 to 385 (GAKLFLCLISPIAIACSIFAM), and 405 to 425 (NQVIGMLVLDIFFYIFLVWYL). The ABC transporter 1 domain occupies 484–717 (ISIRNLRKEY…FGCGYLLTCS (234 aa)). 520 to 527 (GPNGSGKS) serves as a coordination point for ATP. Transmembrane regions (helical) follow at residues 856-876 (FFLTLVIPLVFIIGSIIMYKA), 1033-1053 (IVYFIIIMMAGYALMAGSFAG), 1083-1103 (VWDYFFSFILILLTTCILAGI), 1111-1131 (FGLMFLCLILFCVSVVPLSYL), 1142-1162 (ATGAITAIHFAIGIIFVIISL), 1183-1203 (VDIVFCILSPLFAYSRILFLV), and 1227-1247 (GSPMIILAAHCIVWVSWIMIL). The ABC transporter 2 domain occupies 1293–1528 (LQFRNLHKLF…FGAGYTFDVK (236 aa)). Position 1331 to 1338 (1331 to 1338 (GLNGAGKT)) interacts with ATP.

Belongs to the ABC transporter superfamily. ABCA family.

It localises to the membrane. This is ABC transporter A family member 2 (abcA2) from Dictyostelium discoideum (Social amoeba).